Consider the following 278-residue polypeptide: Undecaprenyl-diphosphatase 1 (278 aa).

7 helical membrane passes run 46–66 (VVGF…VYFF), 91–111 (YTFT…GLAA), 119–139 (LASL…MWFA), 153–173 (SLPD…FPGF), 191–211 (VAAT…AGLY), 225–245 (PLAV…AWLL), and 256–276 (FIIY…GGAI).

This sequence belongs to the UppP family.

Its subcellular location is the cell membrane. The enzyme catalyses di-trans,octa-cis-undecaprenyl diphosphate + H2O = di-trans,octa-cis-undecaprenyl phosphate + phosphate + H(+). Catalyzes the dephosphorylation of undecaprenyl diphosphate (UPP). Confers resistance to bacitracin. The chain is Undecaprenyl-diphosphatase 1 from Frankia alni (strain DSM 45986 / CECT 9034 / ACN14a).